Here is a 380-residue protein sequence, read N- to C-terminus: Cytochrome b (380 aa).

The next 4 helical transmembrane spans lie at 33–53 (FGSL…FLAM), 77–98 (WLIR…YLHI), 113–133 (WNVG…GYVL), and 178–198 (FFAF…IHLL). H83 and H97 together coordinate heme b. Residues H182 and H196 each contribute to the heme b site. H201 contributes to the a ubiquinone binding site. A run of 4 helical transmembrane segments spans residues 226 to 246 (YKDL…ALFS), 288 to 308 (LGGV…PILH), 320 to 340 (ITQF…WIGG), and 347 to 367 (FIII…VLTP).

This sequence belongs to the cytochrome b family. In terms of assembly, the cytochrome bc1 complex contains 3 respiratory subunits (MT-CYB, CYC1 and UQCRFS1), 2 core proteins (UQCRC1 and UQCRC2) and probably 6 low-molecular weight proteins. Heme b is required as a cofactor.

It localises to the mitochondrion inner membrane. Component of the ubiquinol-cytochrome c reductase complex (complex III or cytochrome b-c1 complex) that is part of the mitochondrial respiratory chain. The b-c1 complex mediates electron transfer from ubiquinol to cytochrome c. Contributes to the generation of a proton gradient across the mitochondrial membrane that is then used for ATP synthesis. The polypeptide is Cytochrome b (mt-cyb) (Dactyloptena peterseni (Starry flying gurnard)).